A 596-amino-acid polypeptide reads, in one-letter code: Arginine--tRNA ligase (596 aa).

The 'HIGH' region signature appears at 127–137; that stretch reads ANPTGPVHVGR.

This sequence belongs to the class-I aminoacyl-tRNA synthetase family.

The protein resides in the cytoplasm. It carries out the reaction tRNA(Arg) + L-arginine + ATP = L-arginyl-tRNA(Arg) + AMP + diphosphate. This chain is Arginine--tRNA ligase, found in Haloquadratum walsbyi (strain DSM 16790 / HBSQ001).